A 507-amino-acid chain; its full sequence is Cytochrome P450 52A7 (507 aa).

The helical transmembrane segment at 6-26 threads the bilayer; the sequence is LHYWYYVLPAFIIFHWIVSAI. Cys-456 contacts heme.

It belongs to the cytochrome P450 family. Requires heme as cofactor.

It is found in the membrane. In terms of biological role, together with an NADPH cytochrome P450 the enzyme system catalyzes the terminal hydroxylation as the first step in the assimilation of alkanes and fatty acids. Preferentially hydroxylates lauric acid. This Candida tropicalis (Yeast) protein is Cytochrome P450 52A7 (CYP52A7).